A 569-amino-acid chain; its full sequence is Probable protein phosphatase 2C BIPP2C1 (569 aa).

Disordered regions lie at residues 166-212 (GSSN…SSKV) and 251-279 (SLDD…GSSI). A compositionally biased stretch (low complexity) spans 174 to 183 (SEVGVESECG). In terms of domain architecture, PPM-type phosphatase spans 329–564 (AAMLPHPSKV…DDVTVVVSVV (236 aa)). 4 residues coordinate Mn(2+): aspartate 358, glycine 359, aspartate 488, and aspartate 555.

The protein belongs to the PP2C family. Mg(2+) is required as a cofactor. It depends on Mn(2+) as a cofactor.

The catalysed reaction is O-phospho-L-seryl-[protein] + H2O = L-seryl-[protein] + phosphate. It catalyses the reaction O-phospho-L-threonyl-[protein] + H2O = L-threonyl-[protein] + phosphate. Its function is as follows. May play a role in responses to biotic and abiotic stresses. The polypeptide is Probable protein phosphatase 2C BIPP2C1 (BIPP2C1) (Oryza sativa subsp. indica (Rice)).